Reading from the N-terminus, the 195-residue chain is Imidazoleglycerol-phosphate dehydratase (195 aa).

Belongs to the imidazoleglycerol-phosphate dehydratase family.

It localises to the cytoplasm. The catalysed reaction is D-erythro-1-(imidazol-4-yl)glycerol 3-phosphate = 3-(imidazol-4-yl)-2-oxopropyl phosphate + H2O. The protein operates within amino-acid biosynthesis; L-histidine biosynthesis; L-histidine from 5-phospho-alpha-D-ribose 1-diphosphate: step 6/9. The chain is Imidazoleglycerol-phosphate dehydratase from Koribacter versatilis (strain Ellin345).